Here is a 406-residue protein sequence, read N- to C-terminus: Argininosuccinate synthase (406 aa).

Residues alanine 13 to serine 21 and alanine 40 each bind ATP. 2 residues coordinate L-citrulline: tyrosine 91 and serine 96. Position 121 (glycine 121) interacts with ATP. L-aspartate-binding residues include threonine 123, asparagine 127, and aspartate 128. Asparagine 127 contributes to the L-citrulline binding site. L-citrulline contacts are provided by arginine 131, serine 180, serine 189, glutamate 265, and tyrosine 277.

The protein belongs to the argininosuccinate synthase family. Type 1 subfamily. As to quaternary structure, homotetramer.

The protein localises to the cytoplasm. The catalysed reaction is L-citrulline + L-aspartate + ATP = 2-(N(omega)-L-arginino)succinate + AMP + diphosphate + H(+). The protein operates within amino-acid biosynthesis; L-arginine biosynthesis; L-arginine from L-ornithine and carbamoyl phosphate: step 2/3. The sequence is that of Argininosuccinate synthase from Syntrophotalea carbinolica (strain DSM 2380 / NBRC 103641 / GraBd1) (Pelobacter carbinolicus).